Consider the following 31-residue polypeptide: Elongation factor Tu (31 aa).

Belongs to the GTP-binding elongation factor family. EF-Tu/EF-1A subfamily. Monomer.

It localises to the cytoplasm. This protein promotes the GTP-dependent binding of aminoacyl-tRNA to the A-site of ribosomes during protein biosynthesis. The chain is Elongation factor Tu (tuf) from Streptomyces laurentii.